The sequence spans 601 residues: Elongation factor 4 (601 aa).

One can recognise a tr-type G domain in the interval 6-188 (AHIRNFSIIA…QIVRKVPPPK (183 aa)). GTP contacts are provided by residues 18–23 (DHGKST) and 135–138 (NKVD).

Belongs to the TRAFAC class translation factor GTPase superfamily. Classic translation factor GTPase family. LepA subfamily.

Its subcellular location is the cell inner membrane. It carries out the reaction GTP + H2O = GDP + phosphate + H(+). Functionally, required for accurate and efficient protein synthesis under certain stress conditions. May act as a fidelity factor of the translation reaction, by catalyzing a one-codon backward translocation of tRNAs on improperly translocated ribosomes. Back-translocation proceeds from a post-translocation (POST) complex to a pre-translocation (PRE) complex, thus giving elongation factor G a second chance to translocate the tRNAs correctly. Binds to ribosomes in a GTP-dependent manner. The protein is Elongation factor 4 of Anaeromyxobacter sp. (strain Fw109-5).